Here is a 217-residue protein sequence, read N- to C-terminus: FGFR1 oncogene partner 2 homolog (217 aa).

Coiled-coil stretches lie at residues 6 to 106 (TIEK…MSKY) and 163 to 188 (KEQE…TRES). Positions 194 to 217 (KEDASESTSLSGLVTSSDLSLRKS) are disordered. The span at 199-217 (ESTSLSGLVTSSDLSLRKS) shows a compositional bias: polar residues.

It belongs to the SIKE family.

The protein resides in the cytoplasm. The protein is FGFR1 oncogene partner 2 homolog (FGFR1OP2) of Gallus gallus (Chicken).